Consider the following 55-residue polypeptide: U-reduvitoxin-Pr2a (55 aa).

The first 21 residues, 1–21, serve as a signal peptide directing secretion; the sequence is MMKFLLVLFLITITLITMAYS. Intrachain disulfides connect Cys-26/Cys-41, Cys-33/Cys-46, and Cys-40/Cys-51.

The protein belongs to the venom Ptu1-like knottin family. In terms of tissue distribution, expressed by the venom gland (posterior main gland) (at protein level).

Its subcellular location is the secreted. Its function is as follows. Binds reversibly and blocks P/Q-type voltage-gated calcium channels (Cav). The chain is U-reduvitoxin-Pr2a from Platymeris rhadamanthus (Red spot assassin bug).